The following is a 247-amino-acid chain: Ubiquinone biosynthesis O-methyltransferase (247 aa).

Residues Arg-41, Gly-72, Asp-93, and Met-136 each coordinate S-adenosyl-L-methionine.

This sequence belongs to the methyltransferase superfamily. UbiG/COQ3 family.

It carries out the reaction a 3-demethylubiquinol + S-adenosyl-L-methionine = a ubiquinol + S-adenosyl-L-homocysteine + H(+). It catalyses the reaction a 3-(all-trans-polyprenyl)benzene-1,2-diol + S-adenosyl-L-methionine = a 2-methoxy-6-(all-trans-polyprenyl)phenol + S-adenosyl-L-homocysteine + H(+). It participates in cofactor biosynthesis; ubiquinone biosynthesis. Its function is as follows. O-methyltransferase that catalyzes the 2 O-methylation steps in the ubiquinone biosynthetic pathway. The sequence is that of Ubiquinone biosynthesis O-methyltransferase from Bartonella tribocorum (strain CIP 105476 / IBS 506).